Consider the following 204-residue polypeptide: Phosphatidylserine decarboxylase proenzyme (204 aa).

S169 functions as the Schiff-base intermediate with substrate; via pyruvic acid in the catalytic mechanism. The residue at position 169 (S169) is a Pyruvic acid (Ser); by autocatalysis.

This sequence belongs to the phosphatidylserine decarboxylase family. PSD-A subfamily. Heterodimer of a large membrane-associated beta subunit and a small pyruvoyl-containing alpha subunit. Requires pyruvate as cofactor. In terms of processing, is synthesized initially as an inactive proenzyme. Formation of the active enzyme involves a self-maturation process in which the active site pyruvoyl group is generated from an internal serine residue via an autocatalytic post-translational modification. Two non-identical subunits are generated from the proenzyme in this reaction, and the pyruvate is formed at the N-terminus of the alpha chain, which is derived from the carboxyl end of the proenzyme. The post-translation cleavage follows an unusual pathway, termed non-hydrolytic serinolysis, in which the side chain hydroxyl group of the serine supplies its oxygen atom to form the C-terminus of the beta chain, while the remainder of the serine residue undergoes an oxidative deamination to produce ammonia and the pyruvoyl prosthetic group on the alpha chain.

It is found in the cell membrane. It catalyses the reaction a 1,2-diacyl-sn-glycero-3-phospho-L-serine + H(+) = a 1,2-diacyl-sn-glycero-3-phosphoethanolamine + CO2. The protein operates within phospholipid metabolism; phosphatidylethanolamine biosynthesis; phosphatidylethanolamine from CDP-diacylglycerol: step 2/2. Its function is as follows. Catalyzes the formation of phosphatidylethanolamine (PtdEtn) from phosphatidylserine (PtdSer). This is Phosphatidylserine decarboxylase proenzyme from Solibacter usitatus (strain Ellin6076).